The chain runs to 1145 residues: DNA-directed RNA polymerase subunit beta (1145 aa).

The span at 1101 to 1112 shows a compositional bias: basic and acidic residues; the sequence is LPEERRVSSSKE. Residues 1101-1145 form a disordered region; that stretch reads LPEERRVSSSKEEIEEEEEVEDNSDEFDETFLEEAEDDFSLDDED. Residues 1113–1145 show a composition bias toward acidic residues; the sequence is EIEEEEEVEDNSDEFDETFLEEAEDDFSLDDED.

It belongs to the RNA polymerase beta chain family. The RNAP catalytic core consists of 2 alpha, 1 beta, 1 beta' and 1 omega subunit. When a sigma factor is associated with the core the holoenzyme is formed, which can initiate transcription.

It carries out the reaction RNA(n) + a ribonucleoside 5'-triphosphate = RNA(n+1) + diphosphate. Its function is as follows. DNA-dependent RNA polymerase catalyzes the transcription of DNA into RNA using the four ribonucleoside triphosphates as substrates. The sequence is that of DNA-directed RNA polymerase subunit beta from Desulforamulus reducens (strain ATCC BAA-1160 / DSM 100696 / MI-1) (Desulfotomaculum reducens).